The chain runs to 459 residues: Palmitoyltransferase PFA4 (459 aa).

Residues 1 to 9 (MAARNWSRV) are Cytoplasmic-facing. The helical transmembrane segment at 10 to 30 (WVGGTVILISFIAFSSQIFVI) threads the bilayer. Residues 31–37 (WPWYGRE) lie on the Lumenal side of the membrane. Residues 38–58 (ISLDLLKLLVPLNLAAFMIFW) form a helical membrane-spanning segment. Residues 59–138 (NYRLCVITSP…GNCVGFYNQG (80 aa)) lie on the Cytoplasmic side of the membrane. One can recognise a DHHC domain in the interval 95 to 145 (RYCKNCEHYKPPRAHHCRQCKTCWLKLDHHCPWIGNCVGFYNQGHFIRFLL). Catalysis depends on Cys-125, which acts as the S-palmitoyl cysteine intermediate. The chain crosses the membrane as a helical span at residues 139–159 (HFIRFLLWVDIGTTFHLIIMV). Topologically, residues 160 to 177 (RRVLYIAEYYHQEPTLAD) are lumenal. The helical transmembrane segment at 178–198 (VLFLVFNFATCVPVWLCVGMF) threads the bilayer. The Cytoplasmic segment spans residues 199-459 (SIYHVYLACG…DTEEESGYAH (261 aa)). The segment at 278–379 (HTTQYFWPPQ…DYDHYDEGPM (102 aa)) is disordered. Positions 286 to 299 (PQDPSRLPNPPPIP) are enriched in pro residues. Positions 310–322 (NGFNPNLQPTNSL) are enriched in polar residues. The segment covering 331–356 (HIDEDEHSHERDQYRHYSSGEERDND) has biased composition (basic and acidic residues).

Belongs to the DHHC palmitoyltransferase family. PFA4 subfamily.

It localises to the endoplasmic reticulum membrane. It catalyses the reaction L-cysteinyl-[protein] + hexadecanoyl-CoA = S-hexadecanoyl-L-cysteinyl-[protein] + CoA. Functionally, mediates the reversible addition of palmitate to target proteins, thereby regulating their membrane association and biological function. The protein is Palmitoyltransferase PFA4 of Cryptococcus neoformans var. neoformans serotype D (strain B-3501A) (Filobasidiella neoformans).